Reading from the N-terminus, the 213-residue chain is Large ribosomal subunit protein uL1 (213 aa).

The protein belongs to the universal ribosomal protein uL1 family. As to quaternary structure, part of the 50S ribosomal subunit.

Binds directly to 23S rRNA. Probably involved in E site tRNA release. Functionally, protein L1 is also a translational repressor protein, it controls the translation of its operon by binding to its mRNA. This Methanocorpusculum labreanum (strain ATCC 43576 / DSM 4855 / Z) protein is Large ribosomal subunit protein uL1.